Reading from the N-terminus, the 67-residue chain is Ubiquinol-cytochrome c reductase complex assembly factor 6 (67 aa).

Residues 1–8 are Mitochondrial matrix-facing; that stretch reads MPGGVPWS. Residues 9-25 traverse the membrane as a helical; Signal-anchor for type II membrane protein segment; sequence AYLKMLSSSLLAMCAGA. Over 26-67 the chain is Mitochondrial intermembrane; the sequence is QVVHWYYRPDLTIPEIPPKPGELKTELLGLKERRHEPHVSQQ.

It belongs to the UQCC6 family. Interacts with UQCRC1. Interacts with UQCRQ. Interacts with UQCC5. Forms a complex, named COMB/coordinator of mitochondrial CYTB biogenesis, composed of UQCC1, UQCC2, UQCC4, UQCC5 and UQCC6; stabilizes nascent cytochrome b/MT-CYB and promotes its membrane insertion. Forms a complex, named COMA, composed of UQCC1, UQCC2 and UQCC4; activates MT-CYB translation. Forms a complex, named COMC, composed of UQCC1, UQCC2; UQCC3 and UQCC4; mediates MT-CYB hemylation and association with the first nuclear-encoded complex III subunit UQCRQ. Interacts with MT-CYB. Highly expressed in brown adipose, cardiac and skeletal muscle (at protein level).

It is found in the mitochondrion inner membrane. In terms of biological role, required for the assembly and stability of the mitochondrial ubiquinol-cytochrome c reductase complex (complex III or cytochrome b-c1 complex), a multisubunit transmembrane complex that is part of the mitochondrial electron transport chain (ETC) which drives oxidative phosphorylation. Mediates early complex III biogenesis. Participates in regulating the levels of electron transport chain proteins, and therefore energy supply, in response to changes in energy demand. Also required for cytochrome c oxidase complex (complex IV) assembly. The sequence is that of Ubiquinol-cytochrome c reductase complex assembly factor 6 from Mus musculus (Mouse).